Here is a 107-residue protein sequence, read N- to C-terminus: Small integral membrane protein 19 (107 aa).

The chain crosses the membrane as a helical span at residues Ala-25–Ala-43.

Belongs to the SMIM19 family.

It localises to the membrane. In Homo sapiens (Human), this protein is Small integral membrane protein 19 (SMIM19).